Consider the following 989-residue polypeptide: MESFRQVKNNNVDLISNNDPLDKNRLLIEDLWESVLREECPDDQAERLIQLKELSYSKQIDGDSSKTFKNEIVDIVNSMDLAESIAAARAFSLYFQLVNILEQRVEEDRYIQSFTNKDVQKSPDNLDPFAPALARQNAPVTFRELFYRLRKLNVPPGKLEELLQEMDIRLVFTAHPTEIVRHTIRHKQTRVANLLKKIQIEQFLTKEEKNSLKTQLKEEVRLWWRTDELHQFKPSVLDEVDYALHYFQQVLFNAMPQLRGRIAEALTDNYPDVQLPSESFCNFGSWVGSDRDGNPSVTPEITWRTACYQRQLMLERYIIATSNLRDQLSVSMQWSQVSSSLLESLETDRVKFPEIYEARATRYRSEPYRLKLSYILEKLRLTQERNNLLADSGWKFDLEGETDNKNLDKVESLYYKSVKEFTYDLELIKNSLISTDLNCESVNTLLTQVHIFGFSLASLDIRQESTRHSDAIQELTNYLDLSVQYDQMSEEEKIKWLIDELNTKRPLIPSDVHWTKTTEETFSVFKMVKRLQQEFGSRICHSYVISMSHSASDLLEVLLLAKEMGLLDQNSQKSKLLVVPLFETVEDLKRAPEVMEKLFKLDFYRSLLPKVGESFKPLQELMLGYSDSNKDSGFVSSNWEIHRAQIALQNLSSRNNILLRLFHGRGGSVGRGGGPAYQAILAQPSGTLKGRIKITEQGEVLASKYSLPELALYNLETVTTAVIQNSLVNNRLDATPEWNQLMSRLAETSRSHYRKLVHENPDLLNFFQEVTPIEEISKLQISSRPARRKKGAKDLSSLRAIPWVFGWTQSRFLLPSWFGVGTALSSELNLDPQQIELLRVLHQRWPFFRMLISKVEMTLSKVDLEVARYYVDTLGSKENKDSFDNIFEVISKEYNLTKSLILEITGKNKLLESDRDLKSSVSLRNKTIIPLGFLQVSLLRRLRDQTRQPPISEFFLDKDESTRAYSRSELLRGALLTINGIAAGMRNTG.

Residues His-175 and Lys-630 contribute to the active site.

Belongs to the PEPCase type 1 family. Mg(2+) is required as a cofactor.

It catalyses the reaction oxaloacetate + phosphate = phosphoenolpyruvate + hydrogencarbonate. Its function is as follows. Forms oxaloacetate, a four-carbon dicarboxylic acid source for the tricarboxylic acid cycle. In Prochlorococcus marinus (strain AS9601), this protein is Phosphoenolpyruvate carboxylase.